A 101-amino-acid chain; its full sequence is Aspartyl/glutamyl-tRNA(Asn/Gln) amidotransferase subunit C (101 aa).

This sequence belongs to the GatC family. Heterotrimer of A, B and C subunits.

The catalysed reaction is L-glutamyl-tRNA(Gln) + L-glutamine + ATP + H2O = L-glutaminyl-tRNA(Gln) + L-glutamate + ADP + phosphate + H(+). It carries out the reaction L-aspartyl-tRNA(Asn) + L-glutamine + ATP + H2O = L-asparaginyl-tRNA(Asn) + L-glutamate + ADP + phosphate + 2 H(+). Functionally, allows the formation of correctly charged Asn-tRNA(Asn) or Gln-tRNA(Gln) through the transamidation of misacylated Asp-tRNA(Asn) or Glu-tRNA(Gln) in organisms which lack either or both of asparaginyl-tRNA or glutaminyl-tRNA synthetases. The reaction takes place in the presence of glutamine and ATP through an activated phospho-Asp-tRNA(Asn) or phospho-Glu-tRNA(Gln). The protein is Aspartyl/glutamyl-tRNA(Asn/Gln) amidotransferase subunit C of Lactococcus lactis subsp. cremoris (strain MG1363).